The chain runs to 84 residues: MALSSQIWAACLLLLLLLASLTSGSVFPQQTGQLAELQPQDRAGARASWMPMFQRRRRRDTHFPICIFCCGCCHRSKCGMCCKT.

A signal peptide spans 1–24 (MALSSQIWAACLLLLLLLASLTSG). Residues 25–54 (SVFPQQTGQLAELQPQDRAGARASWMPMFQ) constitute a propeptide that is removed on maturation. Disulfide bonds link cysteine 66/cysteine 82, cysteine 69/cysteine 72, cysteine 70/cysteine 78, and cysteine 73/cysteine 81.

This sequence belongs to the hepcidin family. Interacts with SLC40A1; this interaction promotes SLC40A1 rapid ubiquitination. As to expression, highest expression in liver and to a lesser extent in heart and brain. Low levels in lung, tonsils, salivary gland, trachea, prostate gland, adrenal gland and thyroid gland. Secreted into the urine and blood. Expressed by hepatocytes.

It is found in the secreted. In terms of biological role, liver-produced hormone that constitutes the main circulating regulator of iron absorption and distribution across tissues. Acts by promoting endocytosis and degradation of ferroportin/SLC40A1, leading to the retention of iron in iron-exporting cells and decreased flow of iron into plasma. Controls the major flows of iron into plasma: absorption of dietary iron in the intestine, recycling of iron by macrophages, which phagocytose old erythrocytes and other cells, and mobilization of stored iron from hepatocytes. Functionally, has strong antimicrobial activity against E.coli ML35P N.cinerea and weaker against S.epidermidis, S.aureus and group b streptococcus bacteria. Active against the fungus C.albicans. No activity against P.aeruginosa. This Homo sapiens (Human) protein is Hepcidin.